The primary structure comprises 233 residues: MSTQLQSVIAVVPAAGVGSRMKADRPKQYLKINGKTILEHTIEKLLSHPQVSQIVVAISDDDPYYPELALNQNPKVVRVSGGSERADSVLSALNCIAEQQLSDWVMVHDAARPCVQLSDIDKLISGAMSHDVGAILAAPVRDTMKRGAQGQIEHTVERADLWHALTPQMFRAKPLWNALSEALQQGVSITDEASAFEWKGLSPALVAGRSDNFKITQPEDLALAEFYLSQNKE.

This sequence belongs to the IspD/TarI cytidylyltransferase family. IspD subfamily.

The catalysed reaction is 2-C-methyl-D-erythritol 4-phosphate + CTP + H(+) = 4-CDP-2-C-methyl-D-erythritol + diphosphate. Its pathway is isoprenoid biosynthesis; isopentenyl diphosphate biosynthesis via DXP pathway; isopentenyl diphosphate from 1-deoxy-D-xylulose 5-phosphate: step 2/6. Its function is as follows. Catalyzes the formation of 4-diphosphocytidyl-2-C-methyl-D-erythritol from CTP and 2-C-methyl-D-erythritol 4-phosphate (MEP). This Vibrio atlanticus (strain LGP32) (Vibrio splendidus (strain Mel32)) protein is 2-C-methyl-D-erythritol 4-phosphate cytidylyltransferase.